A 373-amino-acid polypeptide reads, in one-letter code: Pectin lyase D (373 aa).

The signal sequence occupies residues 1 to 19 (MKYAAALTAIAALAARAAA). 2 disulfides stabilise this stretch: Cys82–Cys101 and Cys91–Cys225. The N-linked (GlcNAc...) asparagine glycan is linked to Asn128. The active site involves Arg255. A glycan (N-linked (GlcNAc...) asparagine) is linked at Asn274. Cysteines 321 and 329 form a disulfide. N-linked (GlcNAc...) asparagine glycosylation is present at Asn348. A compositionally biased stretch (low complexity) spans 354 to 366 (LPSADAASTSPAS). Positions 354-373 (LPSADAASTSPASNAGQGNL) are disordered.

This sequence belongs to the polysaccharide lyase 1 family. May be O-glycosylated; does not contain N-acetylglucosamine.

Its subcellular location is the secreted. The catalysed reaction is Eliminative cleavage of (1-&gt;4)-alpha-D-galacturonan methyl ester to give oligosaccharides with 4-deoxy-6-O-methyl-alpha-D-galact-4-enuronosyl groups at their non-reducing ends.. Its function is as follows. Pectinolytic enzymes consist of four classes of enzymes: pectin lyase, polygalacturonase, pectin methylesterase and rhamnogalacturonase. Among pectinolytic enzymes, pectin lyase is the most important in depolymerization of pectin, since it cleaves internal glycosidic bonds of highly methylated pectins. This chain is Pectin lyase D (pelD), found in Aspergillus niger.